Consider the following 151-residue polypeptide: Deoxyuridine 5'-triphosphate nucleotidohydrolase (151 aa).

Residues 70–72 (RSG), N83, 87–89 (LID), and M97 each bind substrate.

It belongs to the dUTPase family. Mg(2+) serves as cofactor.

It catalyses the reaction dUTP + H2O = dUMP + diphosphate + H(+). The protein operates within pyrimidine metabolism; dUMP biosynthesis; dUMP from dCTP (dUTP route): step 2/2. In terms of biological role, this enzyme is involved in nucleotide metabolism: it produces dUMP, the immediate precursor of thymidine nucleotides and it decreases the intracellular concentration of dUTP so that uracil cannot be incorporated into DNA. This is Deoxyuridine 5'-triphosphate nucleotidohydrolase from Pseudomonas entomophila (strain L48).